Reading from the N-terminus, the 107-residue chain is Ribonuclease P protein subunit rpr2 (107 aa).

Residues Cys-59, Cys-62, Cys-93, and Cys-96 each coordinate Zn(2+).

Belongs to the eukaryotic/archaeal RNase P protein component 4 family. The cofactor is Zn(2+).

It is found in the cytoplasm. The protein localises to the nucleus. It catalyses the reaction Endonucleolytic cleavage of RNA, removing 5'-extranucleotides from tRNA precursor.. Component of ribonuclease P, a protein complex that generates mature tRNA molecules by cleaving their 5'-ends. The polypeptide is Ribonuclease P protein subunit rpr2 (rpr2) (Schizosaccharomyces pombe (strain 972 / ATCC 24843) (Fission yeast)).